A 600-amino-acid chain; its full sequence is Long-chain-fatty-acid--CoA ligase FadD15 (600 aa).

This sequence belongs to the ATP-dependent AMP-binding enzyme family.

It catalyses the reaction a long-chain fatty acid + ATP + CoA = a long-chain fatty acyl-CoA + AMP + diphosphate. The catalysed reaction is dodecanoate + ATP + CoA = dodecanoyl-CoA + AMP + diphosphate. It carries out the reaction hexadecanoate + ATP + CoA = hexadecanoyl-CoA + AMP + diphosphate. It participates in lipid metabolism; fatty acid biosynthesis. Its function is as follows. Catalyzes the activation of long-chain fatty acids as acyl-coenzyme A (acyl-CoA), which are then transferred to the multifunctional polyketide synthase (PKS) type III for further chain extension. This Mycobacterium tuberculosis (strain ATCC 25618 / H37Rv) protein is Long-chain-fatty-acid--CoA ligase FadD15 (fadD15).